The chain runs to 418 residues: Serine/threonine transporter SstT (418 aa).

The next 8 helical transmembrane spans lie at 21 to 41 (ILIG…AAIA), 49 to 69 (FVGA…IASI), 83 to 103 (ILFL…VVSF), 142 to 162 (ALLN…GIAL), 190 to 210 (FAPL…GFGA), 217 to 237 (LLVV…PLIV), 299 to 319 (MAGA…TLGI), and 331 to 351 (VVAA…LLLI).

It belongs to the dicarboxylate/amino acid:cation symporter (DAACS) (TC 2.A.23) family.

The protein localises to the cell inner membrane. It catalyses the reaction L-serine(in) + Na(+)(in) = L-serine(out) + Na(+)(out). It carries out the reaction L-threonine(in) + Na(+)(in) = L-threonine(out) + Na(+)(out). Involved in the import of serine and threonine into the cell, with the concomitant import of sodium (symport system). The polypeptide is Serine/threonine transporter SstT (Yersinia pestis bv. Antiqua (strain Antiqua)).